Consider the following 270-residue polypeptide: Orotidine 5'-phosphate decarboxylase (270 aa).

Residue Lys-95 is the Proton donor of the active site.

Belongs to the OMP decarboxylase family. Type 2 subfamily.

It carries out the reaction orotidine 5'-phosphate + H(+) = UMP + CO2. Its pathway is pyrimidine metabolism; UMP biosynthesis via de novo pathway; UMP from orotate: step 2/2. The chain is Orotidine 5'-phosphate decarboxylase from Azoarcus sp. (strain BH72).